The sequence spans 240 residues: MATAMYLEHYLDSIENLPCELQRNFQLMRELDQRTEDKKAEIDILAAEYISTVKTLSPDQRVERLQKIQNAYSKCKEYSDDKVQLAMQTYEMVDKHIRRLDADLARFEADLKDKMEGSDFESSGGRGLKKGRGQKEKRGSRGRGRRTSEEDTPKKKKHKGGSEFTDTILSVHPSDVLDMPVDPNEPTYCLCHQVSYGEMIGCDNPDCPIEWFHFACVDLTTKPKGKWFCPRCVQEKRKKK.

K114 is subject to N6-acetyllysine. A disordered region spans residues 116–165; the sequence is EGSDFESSGGRGLKKGRGQKEKRGSRGRGRRTSEEDTPKKKKHKGGSEFT. S118 carries the post-translational modification Phosphoserine. R126 carries the post-translational modification Omega-N-methylarginine. The segment at 186-235 adopts a PHD-type zinc-finger fold; the sequence is PTYCLCHQVSYGEMIGCDNPDCPIEWFHFACVDLTTKPKGKWFCPRCVQE. Zn(2+) is bound by residues C189, C191, C202, C207, H213, C216, C229, and C232.

It belongs to the ING family. As to quaternary structure, component of the HBO1 complex composed of KAT7/HBO1, MEAF6, ING5, and one scaffold subunit: complexes containing BRPF scaffold (BRPF1, BRD1/BRPF2 or BRPF3) direct KAT7/HBO1 specificity towards H3K14ac, while complexes containing JADE scaffold (JADE1, JADE2 and JADE3) mediate acetylation of histone H4. Component of the MOZ/MORF complex composed at least of ING5, KAT6A, KAT6B, MEAF6 and one of BRPF1, BRD1/BRPF2 and BRPF3. Interacts with H3K4me3 and to a lesser extent with H3K4me2. Interacts with EP300 and p53/TP53. Interacts with INCA1. Down-regulated in bone marrow cells in acute myeloid leukemia patients as compared with normal bone marrow cells.

It localises to the nucleus. Its subcellular location is the chromosome. Functionally, component of the HBO1 complex, which specifically mediates acetylation of histone H3 at 'Lys-14' (H3K14ac) and, to a lower extent, acetylation of histone H4. Component of the MOZ/MORF complex which has a histone H3 acetyltransferase activity. Through chromatin acetylation it may regulate DNA replication and may function as a transcriptional coactivator. Inhibits cell growth, induces a delay in S-phase progression and enhances Fas-induced apoptosis in an INCA1-dependent manner. The polypeptide is Inhibitor of growth protein 5 (ING5) (Homo sapiens (Human)).